The sequence spans 231 residues: S-norcoclaurine synthase 2 (231 aa).

A dopamine-binding site is contributed by 107–109; the sequence is YKE. Catalysis depends on Lys-121, which acts as the Proton donor. Asp-140 contacts (4-hydroxyphenyl)acetaldehyde. The helical transmembrane segment at 210 to 230 threads the bilayer; the sequence is LLLCLIICLVIAGGMFVAGVP.

It belongs to the BetVI family. Expressed in roots, stems and leaves. Detected in flower buds and germinating seeds. Low expression in carpels. Restricted to sieve elements of the phloem adjacent or proximal to laticifers.

Its subcellular location is the endoplasmic reticulum membrane. The protein resides in the vacuole membrane. It catalyses the reaction (4-hydroxyphenyl)acetaldehyde + dopamine = (S)-norcoclaurine + H2O. Its pathway is alkaloid biosynthesis; (S)-reticuline biosynthesis. Its activity is regulated as follows. Activity doubles within 5 hours of elicitor treatment and continues to increase for at least 80 hours. Involved in the biosynthesis of (S)-coclaurine, the common precursor of all benzylisoquinoline alkaloids such as morphine, sanguinarine, codeine or papaverine. Condenses dopamine and 4-hydroxyphenylacetaldehyde. The polypeptide is S-norcoclaurine synthase 2 (Papaver somniferum (Opium poppy)).